The chain runs to 356 residues: Butyrate kinase (356 aa).

Belongs to the acetokinase family.

It localises to the cytoplasm. It catalyses the reaction butanoate + ATP = butanoyl phosphate + ADP. Its pathway is lipid metabolism; butanoate metabolism. In terms of biological role, catalyzes the conversion of butyryl-CoA through butyryl phosphate to butyrate. This is Butyrate kinase (buk) from Clostridium perfringens (strain 13 / Type A).